Consider the following 330-residue polypeptide: Malate dehydrogenase (330 aa).

NAD(+) is bound at residue 12–18; it reads GAAGQIG. Substrate contacts are provided by arginine 93 and arginine 99. NAD(+) is bound by residues asparagine 106, glutamine 113, and 130–132; that span reads VGN. Asparagine 132 and arginine 163 together coordinate substrate. Histidine 188 acts as the Proton acceptor in catalysis.

It belongs to the LDH/MDH superfamily. MDH type 2 family.

The enzyme catalyses (S)-malate + NAD(+) = oxaloacetate + NADH + H(+). Catalyzes the reversible oxidation of malate to oxaloacetate. In Thermobifida fusca (strain YX), this protein is Malate dehydrogenase.